A 141-amino-acid chain; its full sequence is Large ribosomal subunit protein uL11 (141 aa).

This sequence belongs to the universal ribosomal protein uL11 family. In terms of assembly, part of the ribosomal stalk of the 50S ribosomal subunit. Interacts with L10 and the large rRNA to form the base of the stalk. L10 forms an elongated spine to which L12 dimers bind in a sequential fashion forming a multimeric L10(L12)X complex. Post-translationally, one or more lysine residues are methylated.

Forms part of the ribosomal stalk which helps the ribosome interact with GTP-bound translation factors. This Geobacillus kaustophilus (strain HTA426) protein is Large ribosomal subunit protein uL11.